The primary structure comprises 185 residues: Peptidyl-tRNA hydrolase (185 aa).

Tyr14 contributes to the tRNA binding site. Catalysis depends on His19, which acts as the Proton acceptor. The tRNA site is built by Phe64, Asn66, and Asn112.

Belongs to the PTH family. In terms of assembly, monomer.

Its subcellular location is the cytoplasm. The enzyme catalyses an N-acyl-L-alpha-aminoacyl-tRNA + H2O = an N-acyl-L-amino acid + a tRNA + H(+). In terms of biological role, hydrolyzes ribosome-free peptidyl-tRNAs (with 1 or more amino acids incorporated), which drop off the ribosome during protein synthesis, or as a result of ribosome stalling. Its function is as follows. Catalyzes the release of premature peptidyl moieties from peptidyl-tRNA molecules trapped in stalled 50S ribosomal subunits, and thus maintains levels of free tRNAs and 50S ribosomes. This chain is Peptidyl-tRNA hydrolase, found in Lacticaseibacillus casei (strain BL23) (Lactobacillus casei).